Reading from the N-terminus, the 61-residue chain is Large ribosomal subunit protein uL30 (61 aa).

The protein belongs to the universal ribosomal protein uL30 family. As to quaternary structure, part of the 50S ribosomal subunit.

The sequence is that of Large ribosomal subunit protein uL30 from Bordetella parapertussis (strain 12822 / ATCC BAA-587 / NCTC 13253).